The chain runs to 579 residues: Type II methyltransferase M.BseCI (579 aa).

The protein belongs to the N(4)/N(6)-methyltransferase family.

The enzyme catalyses a 2'-deoxyadenosine in DNA + S-adenosyl-L-methionine = an N(6)-methyl-2'-deoxyadenosine in DNA + S-adenosyl-L-homocysteine + H(+). A gamma subtype methylase, recognizes the double-stranded sequence 5'-ATCGAT-3', methylation on A-5 on both strands, and protects the DNA from cleavage by the BanIII endonuclease. The polypeptide is Type II methyltransferase M.BseCI (Geobacillus stearothermophilus (Bacillus stearothermophilus)).